The chain runs to 640 residues: Threonine--tRNA ligase (640 aa).

Positions 1-61 (MPTITLPDGS…ENDASLQIIT (61 aa)) constitute a TGS domain. Residues 242–533 (DHRKIGKRLG…LIEHYEGAFP (292 aa)) form a catalytic region. The Zn(2+) site is built by Cys-333, His-384, and His-510.

The protein belongs to the class-II aminoacyl-tRNA synthetase family. Homodimer. Zn(2+) is required as a cofactor.

The protein resides in the cytoplasm. The catalysed reaction is tRNA(Thr) + L-threonine + ATP = L-threonyl-tRNA(Thr) + AMP + diphosphate + H(+). Catalyzes the attachment of threonine to tRNA(Thr) in a two-step reaction: L-threonine is first activated by ATP to form Thr-AMP and then transferred to the acceptor end of tRNA(Thr). Also edits incorrectly charged L-seryl-tRNA(Thr). The chain is Threonine--tRNA ligase from Pseudomonas syringae pv. syringae (strain B728a).